The chain runs to 606 residues: WD repeat-containing protein 1 (606 aa).

13 WD repeats span residues Glu-4 to Ile-45, Pro-48 to Thr-87, Ile-93 to Thr-135, Ser-138 to Gly-176, Lys-180 to Gly-218, Val-224 to Val-263, Ser-270 to Lys-306, Lys-311 to Ser-351, Ser-358 to Val-408, Leu-432 to Ile-474, Lys-480 to Val-518, Ser-523 to Leu-561, and Thr-566 to Ile-604. An N6-acetyllysine mark is found at Lys-28, Lys-81, Lys-95, and Lys-115. Tyr-238 is modified (phosphotyrosine). N6-acetyllysine is present on Lys-480.

Belongs to the WD repeat AIP1 family.

The protein localises to the cytoplasm. The protein resides in the cytoskeleton. It localises to the cell projection. Its subcellular location is the podosome. In terms of biological role, induces disassembly of actin filaments in conjunction with ADF/cofilin family proteins. Enhances cofilin-mediated actin severing. Involved in cytokinesis. Involved in chemotactic cell migration by restricting lamellipodial membrane protrusions. Involved in myocardium sarcomere organization. Required for cardiomyocyte growth and maintenance. Involved in megakaryocyte maturation and platelet shedding. Required for the establishment of planar cell polarity (PCP) during follicular epithelium development and for cell shape changes during PCP; the function seems to implicate cooperation with CFL1 and/or DSTN/ADF. Involved in the generation/maintenance of cortical tension. Involved in assembly and maintenance of epithelial apical cell junctions and plays a role in the organization of the perijunctional actomyosin belt. This is WD repeat-containing protein 1 (Wdr1) from Rattus norvegicus (Rat).